The primary structure comprises 45 residues: uncharacterized protein (45 aa).

Residues 15–37 traverse the membrane as a helical segment; that stretch reads EVVGTLMAVLITFALVAVVFNFI.

The protein resides in the membrane. This is an uncharacterized protein from Archaeoglobus fulgidus (strain ATCC 49558 / DSM 4304 / JCM 9628 / NBRC 100126 / VC-16).